The chain runs to 123 residues: Methicillin resistance regulatory protein MecI (123 aa).

Positions 7-71 (EISSAEWEVM…KDNKIFQYYS (65 aa)) form a DNA-binding region, H-T-H motif. The important for dimerization stretch occupies residues 74 to 123 (EESDIKYKTSKNFINKVYKGGFNSLVLNFVEKEDLSQDEIEELRNILNKK).

It belongs to the BlaI transcriptional regulatory family. As to quaternary structure, monomer and homodimer. Upon exposure to beta-lactams, proteolytic cleavage at a single site impairs dimerization and abolishes repressor activity.

Its subcellular location is the cytoplasm. In terms of biological role, transcriptional repressor that constitutively blocks the transcription of the gene for the penicillin-binding protein MecA. Binds palindromic DNA with the sequence 5'-TACA-[AT]-N-TGTA-3'. Regulates genes involved in antibiotic resistance. Binds DNA as a dimer. The protein is Methicillin resistance regulatory protein MecI (mecI) of Staphylococcus aureus (strain N315).